A 375-amino-acid polypeptide reads, in one-letter code: Myb family transcription factor PHL5 (375 aa).

Residues Thr159–Arg171 are compositionally biased toward polar residues. Residues Thr159 to Phe178 are disordered. An HTH myb-type domain is found at Cys189–Tyr249. The H-T-H motif DNA-binding region spans Pro220–Arg245. Residues Lys279 to Gln299 adopt a coiled-coil conformation. Positions Leu292–Glu297 match the LHEQLE motif.

This sequence belongs to the MYB-CC family.

It is found in the nucleus. The polypeptide is Myb family transcription factor PHL5 (Arabidopsis thaliana (Mouse-ear cress)).